Here is a 353-residue protein sequence, read N- to C-terminus: Photosystem II protein D1 (353 aa).

Residue Thr-2 is modified to N-acetylthreonine. Thr-2 is subject to Phosphothreonine. A run of 3 helical transmembrane segments spans residues 29 to 46 (YIGW…TATS), 118 to 133 (HFLL…EWEL), and 142 to 156 (WIAV…AATA). Chlorophyll a is bound at residue His-118. Tyr-126 contacts pheophytin a. Positions 170 and 189 each coordinate [CaMn4O5] cluster. Residues 197-218 (FHMLGVAGVFGGSLFSAMHGSL) traverse the membrane as a helical segment. A chlorophyll a-binding site is contributed by His-198. A quinone-binding positions include His-215 and 264 to 265 (SF). Residue His-215 participates in Fe cation binding. His-272 serves as a coordination point for Fe cation. The helical transmembrane segment at 274-288 (FLAAWPVVCIWFTAL) threads the bilayer. [CaMn4O5] cluster-binding residues include His-332, Glu-333, Asp-342, and Ala-344. Residues 345–353 (SVDAPAVQG) constitute a propeptide that is removed on maturation.

Belongs to the reaction center PufL/M/PsbA/D family. PSII is composed of 1 copy each of membrane proteins PsbA, PsbB, PsbC, PsbD, PsbE, PsbF, PsbH, PsbI, PsbJ, PsbK, PsbL, PsbM, PsbT, PsbX, PsbY, PsbZ, Psb30/Ycf12, at least 3 peripheral proteins of the oxygen-evolving complex and a large number of cofactors. It forms dimeric complexes. It depends on The D1/D2 heterodimer binds P680, chlorophylls that are the primary electron donor of PSII, and subsequent electron acceptors. It shares a non-heme iron and each subunit binds pheophytin, quinone, additional chlorophylls, carotenoids and lipids. D1 provides most of the ligands for the Mn4-Ca-O5 cluster of the oxygen-evolving complex (OEC). There is also a Cl(-1) ion associated with D1 and D2, which is required for oxygen evolution. The PSII complex binds additional chlorophylls, carotenoids and specific lipids. as a cofactor. Post-translationally, tyr-161 forms a radical intermediate that is referred to as redox-active TyrZ, YZ or Y-Z. C-terminally processed by CTPA; processing is essential to allow assembly of the oxygen-evolving complex and thus photosynthetic growth.

Its subcellular location is the plastid. It is found in the chloroplast thylakoid membrane. The catalysed reaction is 2 a plastoquinone + 4 hnu + 2 H2O = 2 a plastoquinol + O2. Photosystem II (PSII) is a light-driven water:plastoquinone oxidoreductase that uses light energy to abstract electrons from H(2)O, generating O(2) and a proton gradient subsequently used for ATP formation. It consists of a core antenna complex that captures photons, and an electron transfer chain that converts photonic excitation into a charge separation. The D1/D2 (PsbA/PsbD) reaction center heterodimer binds P680, the primary electron donor of PSII as well as several subsequent electron acceptors. The chain is Photosystem II protein D1 from Nephroselmis olivacea (Green alga).